The sequence spans 328 residues: Malate dehydrogenase (328 aa).

Residue 12–18 (GAAGQIG) participates in NAD(+) binding. Substrate-binding residues include Arg95 and Arg101. Residues Asn108, Gln115, and 132–134 (VGN) each bind NAD(+). The substrate site is built by Asn134 and Arg165. Catalysis depends on His190, which acts as the Proton acceptor.

The protein belongs to the LDH/MDH superfamily. MDH type 2 family.

The enzyme catalyses (S)-malate + NAD(+) = oxaloacetate + NADH + H(+). Functionally, catalyzes the reversible oxidation of malate to oxaloacetate. In Polaromonas sp. (strain JS666 / ATCC BAA-500), this protein is Malate dehydrogenase.